The primary structure comprises 543 residues: ATP synthase subunit alpha (543 aa).

174–181 contributes to the ATP binding site; it reads GDRQTGKT. A disordered region spans residues 521–543; that stretch reads VEKKPDVDKAAPVDQEKIVAGEK.

Belongs to the ATPase alpha/beta chains family. As to quaternary structure, F-type ATPases have 2 components, CF(1) - the catalytic core - and CF(0) - the membrane proton channel. CF(1) has five subunits: alpha(3), beta(3), gamma(1), delta(1), epsilon(1). CF(0) has three main subunits: a(1), b(2) and c(9-12). The alpha and beta chains form an alternating ring which encloses part of the gamma chain. CF(1) is attached to CF(0) by a central stalk formed by the gamma and epsilon chains, while a peripheral stalk is formed by the delta and b chains.

Its subcellular location is the cell membrane. It catalyses the reaction ATP + H2O + 4 H(+)(in) = ADP + phosphate + 5 H(+)(out). Functionally, produces ATP from ADP in the presence of a proton gradient across the membrane. The alpha chain is a regulatory subunit. This chain is ATP synthase subunit alpha, found in Bifidobacterium longum (strain DJO10A).